The sequence spans 159 residues: Ribosomal RNA large subunit methyltransferase H (159 aa).

Residues L76, G108, and 127 to 132 (FSKMTF) each bind S-adenosyl-L-methionine.

It belongs to the RNA methyltransferase RlmH family. In terms of assembly, homodimer.

The protein resides in the cytoplasm. The catalysed reaction is pseudouridine(1915) in 23S rRNA + S-adenosyl-L-methionine = N(3)-methylpseudouridine(1915) in 23S rRNA + S-adenosyl-L-homocysteine + H(+). Functionally, specifically methylates the pseudouridine at position 1915 (m3Psi1915) in 23S rRNA. The sequence is that of Ribosomal RNA large subunit methyltransferase H from Staphylococcus saprophyticus subsp. saprophyticus (strain ATCC 15305 / DSM 20229 / NCIMB 8711 / NCTC 7292 / S-41).